Consider the following 208-residue polypeptide: V-type ATP synthase subunit D (208 aa).

This sequence belongs to the V-ATPase D subunit family.

Its function is as follows. Produces ATP from ADP in the presence of a proton gradient across the membrane. The chain is V-type ATP synthase subunit D from Chlamydia felis (strain Fe/C-56) (Chlamydophila felis).